Reading from the N-terminus, the 142-residue chain is ATP synthase epsilon chain (142 aa).

Belongs to the ATPase epsilon chain family. In terms of assembly, F-type ATPases have 2 components, CF(1) - the catalytic core - and CF(0) - the membrane proton channel. CF(1) has five subunits: alpha(3), beta(3), gamma(1), delta(1), epsilon(1). CF(0) has three main subunits: a, b and c.

The protein resides in the cell inner membrane. In terms of biological role, produces ATP from ADP in the presence of a proton gradient across the membrane. In Actinobacillus succinogenes (strain ATCC 55618 / DSM 22257 / CCUG 43843 / 130Z), this protein is ATP synthase epsilon chain.